The sequence spans 767 residues: Cap-specific mRNA (nucleoside-2'-O-)-methyltransferase 2 (767 aa).

Residues 109-322 (ELCTQAWCKF…VYVVCLRYKG (214 aa)) enclose the Adrift-type SAM-dependent 2'-O-MTase domain. Lys117 is an active-site residue. Gly148, Trp167, and Asp235 together coordinate S-adenosyl-L-methionine. Asp235 is a catalytic residue. Lys275 acts as the Proton acceptor in catalysis.

It localises to the nucleus. It is found in the cytoplasm. It carries out the reaction a 5'-end (N(7)-methyl 5'-triphosphoguanosine)-(2'-O-methyl-ribonucleoside)-(ribonucleotide) in mRNA + S-adenosyl-L-methionine = a 5'-end (N(7)-methyl 5'-triphosphoguanosine)-(2'-O-methyl-ribonucleoside)-(2'-O-methyl-ribonucleotide) in mRNA + S-adenosyl-L-homocysteine + H(+). Functionally, S-adenosyl-L-methionine-dependent methyltransferase that mediates mRNA cap2 2'-O-ribose methylation to the 5'-cap structure of mRNAs. Methylates the ribose of the second nucleotide of a m(7)GpppG-capped mRNA and small nuclear RNA (snRNA) (cap0) to produce m(7)GpppRmpNm (cap2). Recognizes a guanosine cap on RNA independently of its N(7) methylation status. Display cap2 methylation on both cap0 and cap1. Displays a preference for cap1 RNAs. The protein is Cap-specific mRNA (nucleoside-2'-O-)-methyltransferase 2 (Cmtr2) of Mus musculus (Mouse).